Reading from the N-terminus, the 72-residue chain is DNA-directed RNA polymerase subunit omega (72 aa).

This sequence belongs to the RNA polymerase subunit omega family. In terms of assembly, the RNAP catalytic core consists of 2 alpha, 1 beta, 1 beta' and 1 omega subunit. When a sigma factor is associated with the core the holoenzyme is formed, which can initiate transcription.

The catalysed reaction is RNA(n) + a ribonucleoside 5'-triphosphate = RNA(n+1) + diphosphate. Its function is as follows. Promotes RNA polymerase assembly. Latches the N- and C-terminal regions of the beta' subunit thereby facilitating its interaction with the beta and alpha subunits. This chain is DNA-directed RNA polymerase subunit omega, found in Clostridium botulinum (strain Loch Maree / Type A3).